Reading from the N-terminus, the 538-residue chain is MEARRSGNFESSIWDDDYIQSLTSSYTGKMYVDKSEKLKIEVKMMMDEATDELEQLELINDLQRLGISYHFKDGIAKMLNNIYKSDSKYMEKDLHLTALKFRLLRQHGYRVPQDVFSSFMDDEGNFEAWVVEDVSVLVSLYEASHISVEGESILDMAKDFSSHHLTEMVEQIGEACLAEQVKRTLELPLHWRVGRLEARWFVQAYETRPNSNPTLVELAKLDFNMVQAKYQDELKRCSRWYEETGLPEKMSFARHRLAECFLWSLGFIPDPHHGYSREIMTKIAVLITITDDIYDIYGALEELQEFTEAFERWDINSLDLLPEYMQICFLAIFNSANELGYQILRDQGLNIIPNLKRSWAELSRAYYLEARWFHNGFVPTTDQYLNTAWISISGPLLLSYGYLTTTNPINNKELKSLEKHPSIIRWPSMVLRLADDLGTSSEEIKRGDVSKSIQCYMNETGCCEGDARHHVKSLIEVALKRMNDEILMEKPFKSFDTNAMNLARISLCFYQYGDGFGKPHSDTIKNLVSLIVLPFHMP.

Residues aspartate 291, aspartate 295, aspartate 435, threonine 439, and glutamate 443 each coordinate Mg(2+). The DDXXD motif signature appears at 291–295; that stretch reads DDIYD.

Belongs to the terpene synthase family. The cofactor is Mg(2+). Mn(2+) is required as a cofactor.

It carries out the reaction (2E,6E)-farnesyl diphosphate = (1S,5S,6R)-alpha-bergamotene + diphosphate. Catalyzes a mixture of sesquiterpenoids from (2E,6E)-farnesyl diphosphate. Catalyzes the formation of exo-alpha-bergamotene, as well as (E)-nerolidol, (Z)-alpha-bisabolene, (E)-beta-farnesene and beta-sesquiphellandrene. Also has activity towards geranyl diphosphate, but to a much lesser extent. This chain is Exo-alpha-bergamotene synthase, found in Lavandula angustifolia (Lavender).